We begin with the raw amino-acid sequence, 166 residues long: Crossover junction endodeoxyribonuclease RuvC (166 aa).

Catalysis depends on residues D7, E67, and D140. Mg(2+) is bound by residues D7, E67, and D140.

This sequence belongs to the RuvC family. In terms of assembly, homodimer which binds Holliday junction (HJ) DNA. The HJ becomes 2-fold symmetrical on binding to RuvC with unstacked arms; it has a different conformation from HJ DNA in complex with RuvA. In the full resolvosome a probable DNA-RuvA(4)-RuvB(12)-RuvC(2) complex forms which resolves the HJ. Mg(2+) is required as a cofactor.

It localises to the cytoplasm. The enzyme catalyses Endonucleolytic cleavage at a junction such as a reciprocal single-stranded crossover between two homologous DNA duplexes (Holliday junction).. The RuvA-RuvB-RuvC complex processes Holliday junction (HJ) DNA during genetic recombination and DNA repair. Endonuclease that resolves HJ intermediates. Cleaves cruciform DNA by making single-stranded nicks across the HJ at symmetrical positions within the homologous arms, yielding a 5'-phosphate and a 3'-hydroxyl group; requires a central core of homology in the junction. The consensus cleavage sequence is 5'-(A/T)TT(C/G)-3'. Cleavage occurs on the 3'-side of the TT dinucleotide at the point of strand exchange. HJ branch migration catalyzed by RuvA-RuvB allows RuvC to scan DNA until it finds its consensus sequence, where it cleaves and resolves the cruciform DNA. The sequence is that of Crossover junction endodeoxyribonuclease RuvC from Ruminiclostridium cellulolyticum (strain ATCC 35319 / DSM 5812 / JCM 6584 / H10) (Clostridium cellulolyticum).